Consider the following 338-residue polypeptide: 1-aminocyclopropane-1-carboxylate deaminase (338 aa).

At K51 the chain carries N6-(pyridoxal phosphate)lysine. S78 acts as the Nucleophile in catalysis.

This sequence belongs to the ACC deaminase/D-cysteine desulfhydrase family. As to quaternary structure, homotrimer. The cofactor is pyridoxal 5'-phosphate.

It catalyses the reaction 1-aminocyclopropane-1-carboxylate + H2O = 2-oxobutanoate + NH4(+). Its function is as follows. Catalyzes a cyclopropane ring-opening reaction, the irreversible conversion of 1-aminocyclopropane-1-carboxylate (ACC) to ammonia and alpha-ketobutyrate. Allows growth on ACC as a nitrogen source. The chain is 1-aminocyclopropane-1-carboxylate deaminase from Burkholderia ambifaria (strain MC40-6).